The primary structure comprises 502 residues: ATP synthase subunit alpha (502 aa).

169–176 (GDRQTGKT) contacts ATP.

The protein belongs to the ATPase alpha/beta chains family. F-type ATPases have 2 components, CF(1) - the catalytic core - and CF(0) - the membrane proton channel. CF(1) has five subunits: alpha(3), beta(3), gamma(1), delta(1), epsilon(1). CF(0) has three main subunits: a(1), b(2) and c(9-12). The alpha and beta chains form an alternating ring which encloses part of the gamma chain. CF(1) is attached to CF(0) by a central stalk formed by the gamma and epsilon chains, while a peripheral stalk is formed by the delta and b chains.

Its subcellular location is the cell membrane. The enzyme catalyses ATP + H2O + 4 H(+)(in) = ADP + phosphate + 5 H(+)(out). Functionally, produces ATP from ADP in the presence of a proton gradient across the membrane. The alpha chain is a regulatory subunit. The chain is ATP synthase subunit alpha from Streptococcus pyogenes serotype M12 (strain MGAS9429).